The chain runs to 908 residues: DNA (cytosine-5)-methyltransferase 3A (908 aa).

The segment covering 1 to 13 (MPSSGPGDTSSSS) has biased composition (low complexity). 2 disordered regions span residues 1–183 (MPSS…PMPR) and 226–281 (NQAS…PEYE). The span at 14–37 (LEREDDRKEGEEQEENRGKEERQE) shows a compositional bias: basic and acidic residues. Residues 44–54 (KVGRPGRKRKH) are compositionally biased toward basic residues. The segment covering 69–80 (TTKSQPMAQDSG) has biased composition (polar residues). At serine 102 the chain carries Phosphoserine. Residues 110-124 (GAPAEGEGTETPPEA) are compositionally biased toward low complexity. The residue at position 120 (threonine 120) is a Phosphothreonine. Lysine 158 participates in a covalent cross-link: Glycyl lysine isopeptide (Lys-Gly) (interchain with G-Cter in SUMO2). Arginine 167 is subject to Omega-N-methylarginine. Residues 195–399 (SKRKRDEWLA…DSGKAVEVQN (205 aa)) are interaction with DNMT1 and DNMT3B. A phosphoserine mark is found at serine 239 and serine 251. Over residues 242 to 256 (AVQQPTDPASPTVAT) the composition is skewed to polar residues. Residue threonine 257 is modified to Phosphothreonine. Residues 265-275 (AGDKNATKAAD) show a composition bias toward basic and acidic residues. The region spanning 288-346 (IGELVWGKLRGFSWWPGRIVSWWMTGRSRAAEGTRWVMWFGDGKFSVVCVEKLMPLSSF) is the PWWP domain. Residues serine 386 and serine 389 each carry the phosphoserine modification. Residues 443–462 (AYAPPPPAKKPRKSTTEKPK) are disordered. Residues 478-610 (EVRQKCRNIE…LQMFFANNHD (133 aa)) enclose the ADD domain. The segment at 489-519 (ICISCGSLNVTLEHPLFIGGMCQNCKNCFLE) adopts a GATA-type; atypical zinc-finger fold. The tract at residues 490–582 (CISCGSLNVT…KEDPWNCYMC (93 aa)) is interaction with the PRC2/EED-EZH2 complex. A PHD-type; atypical zinc finger spans residues 530–586 (QSYCTICCGGREVLMCGNNNCCRCFCVECVDLLVGPGAAQAAIKEDPWNCYMCGHKG). The region spanning 630–908 (IRVLSLFDGI…APLKEYFACV (279 aa)) is the SAM-dependent MTase C5-type domain. S-adenosyl-L-methionine contacts are provided by residues 637-641 (DGIAT), glutamate 660, and 682-684 (DVR). Cysteine 706 is an active-site residue. Residue cysteine 706 is modified to S-methylcysteine; by autocatalysis. 887–889 (RSW) contacts S-adenosyl-L-methionine.

It belongs to the class I-like SAM-binding methyltransferase superfamily. C5-methyltransferase family. Heterotetramer composed of 1 DNMT3A homodimer and 2 DNMT3L subunits (DNMT3L-DNMT3A-DNMT3A-DNMT3L). Interacts with DNMT1 and DNMT3B. Interacts with MPHOSPH8. Interacts with histone H3 that is not methylated at 'Lys-4' (H3K4). Binds the ZBTB18 transcriptional repressor. Interacts with SETDB1. Associates with HDAC1 through its ADD domain. Interacts with UHRF1. Interacts with the PRC2/EED-EZH2 complex. Interacts with UBC9, PIAS1 and PIAS2. Interacts with SPOCD1. Interacts with ZNF263; recruited to the SIX3 promoter along with other proteins involved in chromatin modification and transcriptional corepression where it contributes to transcriptional repression. In terms of processing, auto-methylated at Cys-706: auto-methylation takes place in absence of DNA substrate and inactivates the DNA methyltransferase activity. Inactivation by auto-methylation may be used to inactivate unused DNA methyltransferases in the cell. Sumoylated; sumoylation disrupts the ability to interact with histone deacetylases (HDAC1 and HDAC2) and repress transcription. Isoform 1 is expressed ubiquitously at low levels. Expression of isoform 2 is restricted to tissues containing cells which are undergoing active de novo methylation, including spleen, testis and thymus.

Its subcellular location is the nucleus. The protein localises to the chromosome. It is found in the cytoplasm. It carries out the reaction a 2'-deoxycytidine in DNA + S-adenosyl-L-methionine = a 5-methyl-2'-deoxycytidine in DNA + S-adenosyl-L-homocysteine + H(+). It catalyses the reaction L-cysteinyl-[protein] + S-adenosyl-L-methionine = S-methyl-L-cysteinyl-[protein] + S-adenosyl-L-homocysteine + H(+). Its activity is regulated as follows. Activated by binding to the regulatory factor DNMT3L. Auto-methylation at Cys-706 in absence of DNA inactivates the DNA methyltransferase activity. In terms of biological role, required for genome-wide de novo methylation and is essential for the establishment of DNA methylation patterns during development. DNA methylation is coordinated with methylation of histones. It modifies DNA in a non-processive manner and also methylates non-CpG sites. May preferentially methylate DNA linker between 2 nucleosomal cores and is inhibited by histone H1. Plays a role in paternal and maternal imprinting. Required for methylation of most imprinted loci in germ cells. Acts as a transcriptional corepressor for ZBTB18. Recruited to trimethylated 'Lys-36' of histone H3 (H3K36me3) sites. Can actively repress transcription through the recruitment of HDAC activity. Also has weak auto-methylation activity on Cys-706 in absence of DNA. This chain is DNA (cytosine-5)-methyltransferase 3A, found in Mus musculus (Mouse).